The primary structure comprises 119 residues: uncharacterized protein (119 aa).

The disordered stretch occupies residues 64-119; that stretch reads SAPLGLKEVQKKSNEGLNEVQGAADINKQKRPANSQDSSSVEGDIQNFLEKVTGKN. The segment covering 95-104 has biased composition (polar residues); sequence PANSQDSSSV.

This is an uncharacterized protein from Nostoc sp. (strain PCC 7120 / SAG 25.82 / UTEX 2576).